Here is a 316-residue protein sequence, read N- to C-terminus: C1GALT1-specific chaperone 1 (316 aa).

Residues 1 to 6 lie on the Cytoplasmic side of the membrane; that stretch reads MLSESS. Residues 7–26 form a helical; Signal-anchor for type II membrane protein membrane-spanning segment; sequence SFLKGVMLGSIFCALITMLG. Topologically, residues 27 to 316 are lumenal; it reads HIRIGNRMHH…FLPPNGSEND (290 aa).

Belongs to the glycosyltransferase 31 family. Beta3-Gal-T subfamily. As to quaternary structure, associates with core 1 beta-3-galactosyltransferase (C1GALT1), probably not with the soluble active form.

It localises to the membrane. Probable chaperone required for the generation of 1 O-glycan Gal-beta1-3GalNAc-alpha1-Ser/Thr (T antigen), which is a precursor for many extended O-glycans in glycoproteins. Probably acts as a specific molecular chaperone assisting the folding/stability of core 1 beta-3-galactosyltransferase (C1GALT1). This is C1GALT1-specific chaperone 1 (C1galt1c1) from Mus musculus (Mouse).